The primary structure comprises 107 residues: ATP synthase subunit c (107 aa).

A run of 3 helical transmembrane segments spans residues 4 to 24, 29 to 49, and 74 to 94; these read IVFL…SMNQ, FSIL…AIGM, and MFIA…IALI.

The protein belongs to the ATPase C chain family. As to quaternary structure, F-type ATPases have 2 components, F(1) - the catalytic core - and F(0) - the membrane proton channel. F(1) has five subunits: alpha(3), beta(3), gamma(1), delta(1), epsilon(1). F(0) has three main subunits: a(1), b(2) and c(10-14). The alpha and beta chains form an alternating ring which encloses part of the gamma chain. F(1) is attached to F(0) by a central stalk formed by the gamma and epsilon chains, while a peripheral stalk is formed by the delta and b chains.

The protein resides in the cell inner membrane. F(1)F(0) ATP synthase produces ATP from ADP in the presence of a proton or sodium gradient. F-type ATPases consist of two structural domains, F(1) containing the extramembraneous catalytic core and F(0) containing the membrane proton channel, linked together by a central stalk and a peripheral stalk. During catalysis, ATP synthesis in the catalytic domain of F(1) is coupled via a rotary mechanism of the central stalk subunits to proton translocation. In terms of biological role, key component of the F(0) channel; it plays a direct role in translocation across the membrane. A homomeric c-ring of between 10-14 subunits forms the central stalk rotor element with the F(1) delta and epsilon subunits. The chain is ATP synthase subunit c from Campylobacter lari (strain RM2100 / D67 / ATCC BAA-1060).